We begin with the raw amino-acid sequence, 240 residues long: Ubiquinone biosynthesis O-methyltransferase (240 aa).

S-adenosyl-L-methionine is bound by residues Arg-44, Gly-64, Asp-85, and Met-129.

This sequence belongs to the methyltransferase superfamily. UbiG/COQ3 family.

The enzyme catalyses a 3-demethylubiquinol + S-adenosyl-L-methionine = a ubiquinol + S-adenosyl-L-homocysteine + H(+). It carries out the reaction a 3-(all-trans-polyprenyl)benzene-1,2-diol + S-adenosyl-L-methionine = a 2-methoxy-6-(all-trans-polyprenyl)phenol + S-adenosyl-L-homocysteine + H(+). Its pathway is cofactor biosynthesis; ubiquinone biosynthesis. O-methyltransferase that catalyzes the 2 O-methylation steps in the ubiquinone biosynthetic pathway. This Shigella flexneri serotype 5b (strain 8401) protein is Ubiquinone biosynthesis O-methyltransferase.